We begin with the raw amino-acid sequence, 245 residues long: MHPQGRAASPQLLLGLFLVLLLLLQLSAPSSASENPKVKQKALIRQREVVDLYNGMCLQGPAGVPGRDGSPGANGIPGTPGIPGRDGFKGEKGECLRESFEESWTPNYKQCSWSSLNYGIDLGKIAECTFTKMRSNSALRVLFSGSLRLKCRNACCQRWYFTFNGAECSGPLPIEAIIYLDQGSPELNSTINIHRTSSVEGLCEGIGAGLVDVAIWVGTCSDYPKGDASTGWNSVSRIIIEELPK.

A signal peptide spans 1–32; sequence MHPQGRAASPQLLLGLFLVLLLLLQLSAPSSA. In terms of domain architecture, Collagen-like spans 59-92; the sequence is QGPAGVPGRDGSPGANGIPGTPGIPGRDGFKGEK. A disordered region spans residues 64–87; sequence VPGRDGSPGANGIPGTPGIPGRDG. The N-linked (GlcNAc...) asparagine glycan is linked to Asn-188.

N-glycosylated. Expressed after injury in the carotid arteries (at protein level). Expressed in brain, lung, and after injury in fibroblasts of the adventitia and the neointima of the arteries.

The protein resides in the secreted. Its subcellular location is the extracellular space. It localises to the extracellular matrix. Functionally, its overexpression in smooth muscle cell lines increases their migratory ability and inhibits collagen type I expression. May act as a negative regulator of collagen matrix deposition. The protein is Collagen triple helix repeat-containing protein 1 (Cthrc1) of Rattus norvegicus (Rat).